Reading from the N-terminus, the 459-residue chain is Type IV methyl-directed restriction enzyme EcoKMcrB subunit (459 aa).

Residues 201–208 (GPPGVGKT), 300–303 (DKRG), and 333–336 (NTAD) each bind GTP.

Its function is as follows. Recognizes N4- and C5-methylcytosine (and 5-hydroxy-methylcytosines) produced by a broad range of DNA methylases and appears to act against 5-methylcytosine preceded by a purine residue. Binds to DNA containing methylated cytosines; also binds to GTP. Isoform 33 kDa is less active than isoform 51 kDa and may play a role in regulating the activity of isoform 51 kDa by competing with it in DNA and protein binding abilities. This is Type IV methyl-directed restriction enzyme EcoKMcrB subunit (mcrB) from Escherichia coli (strain K12).